The chain runs to 114 residues: Amphinase-2 (114 aa).

His-15 serves as the catalytic Proton acceptor. 4 disulfides stabilise this stretch: Cys-26/Cys-79, Cys-41/Cys-85, Cys-59/Cys-100, and Cys-97/Cys-114. A glycan (N-linked (GlcNAc...) asparagine) is linked at Asn-27. A substrate-binding site is contributed by 42–46; sequence KPINT. N-linked (GlcNAc...) asparagine glycosylation is found at Asn-67 and Asn-91. Residue His-107 is the Proton donor of the active site.

The protein belongs to the pancreatic ribonuclease family. As to quaternary structure, monomer. Post-translationally, there are at least four different forms arising from glycan heterogeneity.

Its subcellular location is the secreted. In terms of biological role, endonuclease, hydrolyzes highly polymerized RNA, poly(U) and poly(C), and the dinucleotides CpA and UpA. Hydrolyzes 18S and 28S ribosomal RNA. More active towards rCA than rUA or rUG. Has cytotoxic activity against cultured human submaxillary gland carcinoma cells. The polypeptide is Amphinase-2 (Lithobates pipiens (Northern leopard frog)).